Here is a 503-residue protein sequence, read N- to C-terminus: uncharacterized protein (503 aa).

ABC transporter domains lie at 8–249 (VPVA…LGRD) and 261–499 (IVDQ…MSAI). 43-50 (GKNGAGKS) lines the ATP pocket.

The protein belongs to the ABC transporter superfamily.

In terms of biological role, probably part of a binding-protein-dependent transport system YphDEF. Probably responsible for energy coupling to the transport system. This is an uncharacterized protein from Escherichia coli (strain K12).